Reading from the N-terminus, the 305-residue chain is Small ribosomal subunit protein bS1B (305 aa).

3 consecutive S1 motif domains span residues 29–98 (GQTV…LSRR), 116–180 (GKTL…LTQR), and 194–262 (GNIY…LSTR).

Belongs to the bacterial ribosomal protein bS1 family.

Binds mRNA. This is Small ribosomal subunit protein bS1B (rps1b) from Synechocystis sp. (strain ATCC 27184 / PCC 6803 / Kazusa).